Here is a 580-residue protein sequence, read N- to C-terminus: Protein O-linked-mannose beta-1,4-N-acetylglucosaminyltransferase 2 (580 aa).

The Cytoplasmic segment spans residues 1-4; the sequence is MHLS. The helical; Signal-anchor for type II membrane protein transmembrane segment at 5-25 threads the bilayer; that stretch reads AVFNALLVSVLAAVLWKHVRL. The Lumenal segment spans residues 26-580; it reads REHAATLEEE…PFADVLVCNT (555 aa). 2 N-linked (GlcNAc...) asparagine glycosylation sites follow: asparagine 99 and asparagine 276. The 93-residue stretch at 488–580 folds into the Fibronectin type-III domain; that stretch reads ARCQASVHGA…PFADVLVCNT (93 aa).

The protein belongs to the glycosyltransferase 61 family. As to expression, highly expressed in the brain, muscle, heart, and kidney in both fetus and adult. In the brain, highest expression in the cortex and cerebellum. Highly expressed in the pancreas.

Its subcellular location is the endoplasmic reticulum membrane. The catalysed reaction is 3-O-(alpha-D-mannosyl)-L-threonyl-[protein] + UDP-N-acetyl-alpha-D-glucosamine = 3-O-(N-acetyl-beta-D-glucosaminyl-(1-&gt;4)-alpha-D-mannosyl)-L-threonyl-[protein] + UDP + H(+). It functions in the pathway protein modification; protein glycosylation. Its function is as follows. O-linked mannose beta-1,4-N-acetylglucosaminyltransferase that transfers UDP-N-acetyl-D-glucosamine to the 4-position of the mannose to generate N-acetyl-D-glucosamine-beta-1,4-O-D-mannosylprotein. Involved in the biosynthesis of the phosphorylated O-mannosyl trisaccharide (N-acetylgalactosamine-beta-3-N-acetylglucosamine-beta-4-(phosphate-6-)mannose), a carbohydrate structure present in alpha-dystroglycan (DAG1), which is required for binding laminin G-like domain-containing extracellular proteins with high affinity. This is Protein O-linked-mannose beta-1,4-N-acetylglucosaminyltransferase 2 (POMGNT2) from Homo sapiens (Human).